Here is a 342-residue protein sequence, read N- to C-terminus: MASSNFYKNLGPRKLTTIIDFLHDIIEHPKIYEDIVIHDIKILQEASRNDISFLSNTKYSEFLKTTNAAACIVPKNFKGEVNPNTILIHAENSYFAYGKLIDFFYAPIKSYPAKIMKSAIVAASAIIGKNCYIGHNVVIEDDVIIGDNSIIEAGSFIGRGVNLGRNARIEQHVSINYAIIGDDVVILTGAKIGQDGFGFSTEKGVHHQIFHTGIVKIGNNVKIGANTTIDRGSLQDTIIEDLCCIDNLVQIGHGVKIGKGSIIIAQVGIAGSSTIGKYCALGGQVGIAGHLNIGDQVQVAAQSGVAQNIEAGKIVGGSPAVHIMNWHRQSIIMKQLIKKRPK.

His-253 (proton acceptor) is an active-site residue.

It belongs to the transferase hexapeptide repeat family. LpxD subfamily. In terms of assembly, homotrimer.

The enzyme catalyses a UDP-3-O-[(3R)-3-hydroxyacyl]-alpha-D-glucosamine + a (3R)-hydroxyacyl-[ACP] = a UDP-2-N,3-O-bis[(3R)-3-hydroxyacyl]-alpha-D-glucosamine + holo-[ACP] + H(+). The protein operates within bacterial outer membrane biogenesis; LPS lipid A biosynthesis. Its function is as follows. Catalyzes the N-acylation of UDP-3-O-acylglucosamine using 3-hydroxyacyl-ACP as the acyl donor. Is involved in the biosynthesis of lipid A, a phosphorylated glycolipid that anchors the lipopolysaccharide to the outer membrane of the cell. The protein is UDP-3-O-acylglucosamine N-acyltransferase of Rickettsia canadensis (strain McKiel).